A 76-amino-acid chain; its full sequence is Small ribosomal subunit protein uS17 (76 aa).

It belongs to the universal ribosomal protein uS17 family. In terms of assembly, part of the 30S ribosomal subunit.

Its function is as follows. One of the primary rRNA binding proteins, it binds specifically to the 5'-end of 16S ribosomal RNA. In Anaplasma phagocytophilum (strain HZ), this protein is Small ribosomal subunit protein uS17.